Here is a 190-residue protein sequence, read N- to C-terminus: Small ribosomal subunit protein uS5 (190 aa).

The S5 DRBM domain occupies 22 to 85 (FVDKLVHINR…ESAKRNLTRV (64 aa)).

This sequence belongs to the universal ribosomal protein uS5 family. Part of the 30S ribosomal subunit. Contacts proteins S4 and S8.

Functionally, with S4 and S12 plays an important role in translational accuracy. In terms of biological role, located at the back of the 30S subunit body where it stabilizes the conformation of the head with respect to the body. This is Small ribosomal subunit protein uS5 from Rhodopseudomonas palustris (strain BisA53).